The following is a 1181-amino-acid chain: HEAT repeat-containing protein 6 (1181 aa).

An HEAT 1 repeat occupies P159–G198. 2 disordered regions span residues Q292–G347 and L371–S390. The segment covering K300–T312 has biased composition (polar residues). Positions L313 to K325 are enriched in basic residues. A phosphoserine mark is found at S336 and S337. 2 positions are modified to phosphoserine: S399 and S402. 3 HEAT repeats span residues E452–Q490, S515–Y552, and S558–P595. Positions N613–G646 are disordered. A Phosphothreonine modification is found at T618. Positions E637 to G646 are enriched in polar residues. At S643 the chain carries Phosphoserine.

Amplified in breast cancer cell lines MCF-7 and BT-474.

Its function is as follows. Amplification-dependent oncogene. In Homo sapiens (Human), this protein is HEAT repeat-containing protein 6 (HEATR6).